The chain runs to 88 residues: Alpha-latrotoxin associated low molecular weight protein 2 (88 aa).

The N-terminal stretch at 1 to 19 (MLKLICIVFLVTVLTFVVG) is a signal peptide. 3 cysteine pairs are disulfide-bonded: Cys30–Cys66, Cys46–Cys62, and Cys49–Cys75.

It belongs to the arthropod CHH/MIH/GIH/VIH hormone family. In terms of tissue distribution, expressed by the venom gland.

It localises to the secreted. In terms of biological role, may increase the toxicity of alpha-latrotoxin and/or other venom components. Is non-toxic to mice and to the cockroach Periplaneta americana. In Latrodectus geometricus (Brown widow spider), this protein is Alpha-latrotoxin associated low molecular weight protein 2.